Here is a 287-residue protein sequence, read N- to C-terminus: Polyamine aminopropyltransferase (287 aa).

Positions 5–238 (ETWHETLHDH…GIMTFAWASQ (234 aa)) constitute a PABS domain. Q33 lines the S-methyl-5'-thioadenosine pocket. Positions 64 and 88 each coordinate spermidine. S-methyl-5'-thioadenosine contacts are provided by residues E108 and 140–141 (DG). Catalysis depends on D158, which acts as the Proton acceptor. A spermidine-binding site is contributed by 158–161 (DCTD). S-methyl-5'-thioadenosine is bound at residue P165.

This sequence belongs to the spermidine/spermine synthase family. Homodimer or homotetramer.

The protein resides in the cytoplasm. The enzyme catalyses S-adenosyl 3-(methylsulfanyl)propylamine + putrescine = S-methyl-5'-thioadenosine + spermidine + H(+). The protein operates within amine and polyamine biosynthesis; spermidine biosynthesis; spermidine from putrescine: step 1/1. In terms of biological role, catalyzes the irreversible transfer of a propylamine group from the amino donor S-adenosylmethioninamine (decarboxy-AdoMet) to putrescine (1,4-diaminobutane) to yield spermidine. The chain is Polyamine aminopropyltransferase from Sodalis glossinidius (strain morsitans).